The following is a 74-amino-acid chain: Anionic peptide clone 8 (74 aa).

Residues 1-24 (MVSKSLIVLLLVSVLVSTFFTTEA) form the signal peptide.

This sequence belongs to the non-disulfide-bridged peptide (NDBP) superfamily. Long chain multifunctional peptide (group 2) family. As to expression, expressed by the venom gland.

It is found in the secreted. Its function is as follows. May be an antimicrobial peptide. The protein is Anionic peptide clone 8 of Tityus costatus (Brazilian scorpion).